The sequence spans 316 residues: GTP cyclohydrolase FolE2 2 (316 aa).

The protein belongs to the GTP cyclohydrolase IV family.

The enzyme catalyses GTP + H2O = 7,8-dihydroneopterin 3'-triphosphate + formate + H(+). Its pathway is cofactor biosynthesis; 7,8-dihydroneopterin triphosphate biosynthesis; 7,8-dihydroneopterin triphosphate from GTP: step 1/1. Functionally, converts GTP to 7,8-dihydroneopterin triphosphate. This Burkholderia orbicola (strain MC0-3) protein is GTP cyclohydrolase FolE2 2.